We begin with the raw amino-acid sequence, 159 residues long: Neuroglobin-2 (159 aa).

The 149-residue stretch at 3–151 (KLTEKDKELI…VVAAMSRGWA (149 aa)) folds into the Globin domain. Heme b-binding residues include H66 and H98.

Belongs to the globin family. In terms of assembly, monomer. Homodimers and homotetramers. Mainly monomeric but also detected as part of homodimers and homotetramers.

It localises to the cytoplasm. It is found in the cytosol. The protein localises to the mitochondrion matrix. It catalyses the reaction Fe(III)-heme b-[protein] + nitric oxide + H2O = Fe(II)-heme b-[protein] + nitrite + 2 H(+). Monomeric globin with a bis-histidyl six-coordinate heme-iron atom through which it can bind dioxygen, carbon monoxide and nitric oxide. Could help transport oxygen and increase its availability to the metabolically active neuronal tissues, though its low quantity in tissues as well as its high affinity for dioxygen, which may limit its oxygen-releasing ability, argue against it. The ferrous/deoxygenated form exhibits a nitrite reductase activity and it could produce nitric oxide which in turn inhibits cellular respiration in response to hypoxia. In its ferrous/deoxygenated state, it may also exhibit GDI (Guanine nucleotide Dissociation Inhibitor) activity toward heterotrimeric G-alpha proteins, thereby regulating signal transduction to facilitate neuroprotective responses in the wake of hypoxia and associated oxidative stress. The polypeptide is Neuroglobin-2 (ngb2) (Oncorhynchus mykiss (Rainbow trout)).